The following is a 189-amino-acid chain: Marginal zone B- and B1-cell-specific protein (189 aa).

The signal sequence occupies residues 1 to 22 (MRLSLPLLLLLLGAWAIPGGLG). Cystine bridges form between cysteine 50–cysteine 178, cysteine 53–cysteine 171, and cysteine 95–cysteine 143. Residues 186 to 189 (REEL) carry the Prevents secretion from ER motif.

This sequence belongs to the MZB1 family. As to quaternary structure, part of the ER chaperone complex, a multi-protein complex in the endoplasmic reticulum containing a large number of molecular chaperones which associates with unassembled incompletely folded immunoglobulin heavy chains. Isoform 2 interacts with CASP2 and CASP9. Interacts with HSP90B1 and PDIA3 in a calcium-dependent manner. Post-translationally, forms an interchain disulfide bond with IgM monomers. As to expression, widely expressed with highest levels in adult brain, small intestine and lymphoid tissues such as thymus and spleen. Expression is frequently lower in intestinal-type gastric cancer. In obese patients, more abundant in omental than in subcutaneous fat.

It localises to the endoplasmic reticulum lumen. Its subcellular location is the secreted. The protein resides in the cytoplasm. Functionally, associates with immunoglobulin M (IgM) heavy and light chains and promotes IgM assembly and secretion. May exert its effect by acting as a molecular chaperone or as an oxidoreductase as it displays a low level of oxidoreductase activity. Isoform 2 may be involved in regulation of apoptosis. Helps to diversify peripheral B-cell functions by regulating Ca(2+) stores, antibody secretion and integrin activation. In terms of biological role, acts as a hormone-regulated adipokine/pro-inflammatory cytokine that is implicated in causing chronic inflammation, affecting cellular expansion and blunting insulin response in adipocytes. May have a role in the onset of insulin resistance. This chain is Marginal zone B- and B1-cell-specific protein (MZB1), found in Homo sapiens (Human).